The chain runs to 167 residues: Ribosome maturation factor RimM (167 aa).

Positions 94 to 165 (ENEFYYSDII…KIIITPMEGL (72 aa)) constitute a PRC barrel domain.

The protein belongs to the RimM family. As to quaternary structure, binds ribosomal protein uS19.

The protein localises to the cytoplasm. An accessory protein needed during the final step in the assembly of 30S ribosomal subunit, possibly for assembly of the head region. Essential for efficient processing of 16S rRNA. May be needed both before and after RbfA during the maturation of 16S rRNA. It has affinity for free ribosomal 30S subunits but not for 70S ribosomes. The polypeptide is Ribosome maturation factor RimM (Staphylococcus aureus (strain MRSA252)).